The chain runs to 526 residues: Major facilitator superfamily domain-containing protein 4A (526 aa).

Transmembrane regions (helical) follow at residues 21-41 (LTYW…GPTI), 55-75 (ITLV…IGGF), 84-104 (LSSL…IPLC), 107-127 (LLML…IDTI), 142-162 (VFLQ…PLIA), 215-235 (YAFW…FVLV), 297-317 (LSFF…DGIV), 341-361 (GYLT…AIPL), 377-397 (GVIV…FLFI), 401-421 (CLGL…EDIL), 430-450 (VLVT…GSVM), and 458-478 (FLLC…FLYF).

It belongs to the major facilitator superfamily.

The protein resides in the membrane. The protein is Major facilitator superfamily domain-containing protein 4A (mfsd4a) of Danio rerio (Zebrafish).